A 510-amino-acid polypeptide reads, in one-letter code: ATP synthase subunit alpha (510 aa).

ATP is bound at residue G169–T176.

It belongs to the ATPase alpha/beta chains family. In terms of assembly, F-type ATPases have 2 components, CF(1) - the catalytic core - and CF(0) - the membrane proton channel. CF(1) has five subunits: alpha(3), beta(3), gamma(1), delta(1), epsilon(1). CF(0) has three main subunits: a(1), b(2) and c(9-12). The alpha and beta chains form an alternating ring which encloses part of the gamma chain. CF(1) is attached to CF(0) by a central stalk formed by the gamma and epsilon chains, while a peripheral stalk is formed by the delta and b chains.

The protein localises to the cell inner membrane. It carries out the reaction ATP + H2O + 4 H(+)(in) = ADP + phosphate + 5 H(+)(out). Functionally, produces ATP from ADP in the presence of a proton gradient across the membrane. The alpha chain is a regulatory subunit. In Anaeromyxobacter dehalogenans (strain 2CP-C), this protein is ATP synthase subunit alpha.